The following is a 182-amino-acid chain: Ribosome maturation factor RimM (182 aa).

The PRC barrel domain occupies 102–182 (EEDDYYWKDL…RVEVDWDPGF (81 aa)).

It belongs to the RimM family. As to quaternary structure, binds ribosomal protein uS19.

It localises to the cytoplasm. Its function is as follows. An accessory protein needed during the final step in the assembly of 30S ribosomal subunit, possibly for assembly of the head region. Essential for efficient processing of 16S rRNA. May be needed both before and after RbfA during the maturation of 16S rRNA. It has affinity for free ribosomal 30S subunits but not for 70S ribosomes. The sequence is that of Ribosome maturation factor RimM from Yersinia pseudotuberculosis serotype IB (strain PB1/+).